A 295-amino-acid polypeptide reads, in one-letter code: MDNNLTSKLKYREAKLGYLMILPLLTVVLVFIILPVMGTFWISLHRDVTFIPEKPFVGLRNYLRVLSAREFWYSTFVTVSFSFVSVSLETILGLSFALILNERLKGRGVLRAIVLIPWAVPTIISARTWELMYNYSYGLFNWILSILGVSPVNWLGTPISAFFAIVIADVWKTTPFMTLLLLAGLQAIPQDLYEAALIDGASMFERFKSITLPLLKPVLIVALILRTIDALRVFDIIYVLTGGGPGGATTSISLLAFNYYNLGDYGIGSAISILTFVLVLSFTIVYLKVGRFRRD.

Helical transmembrane passes span 16 to 36 (LGYL…ILPV), 79 to 99 (VSFS…FALI), 112 to 132 (AIVL…WELM), 146 to 166 (ILGV…FAIV), 210 to 230 (ITLP…TIDA), 236 to 256 (IIYV…SLLA), and 267 to 287 (IGSA…IVYL). The ABC transmembrane type-1 domain maps to 75 to 286 (TFVTVSFSFV…VLVLSFTIVY (212 aa)).

This sequence belongs to the binding-protein-dependent transport system permease family. The complex is composed of two ATP-binding proteins (MalK), two transmembrane proteins (MalG and MalF) and a solute-binding protein (MalE).

It is found in the cell membrane. Its function is as follows. Part of the ABC transporter complex MalEFGK involved in trehalose/maltose import. Responsible for the translocation of the substrate across the membrane. The sequence is that of Trehalose/maltose transport system permease protein MalF (malF) from Thermococcus litoralis (strain ATCC 51850 / DSM 5473 / JCM 8560 / NS-C).